A 431-amino-acid chain; its full sequence is MAKIINVIGREIMDSRGNPTVEAEVHLDGGFVGMAAAPSGASTGSREALELRDGDKSRYMGKGVLTAVANINGQIRDALMGKDATAQAELDQIMIDLDGTENKDKLGANAILAVSLAAAKAAAAFKGMPLYAHIAELNGTPGQYSMPVPMMNILNGGEHADNNVDIQEFMVQPVGAKSFREALRMGAEIFHNLKKVLQEKGLNTAVGDEGGFAPNLASNADALAVIKVAVEKAGYKLGEDVTLALDCAASEFYKDGQYDLSGEGKVFDSNGFSDFLKSLTEEYPIVSIEDGLDESDWDGWAYQTQILGDKIQLVGDDLFVTNTKILSRGIENKIANSILIKFNQIGSLTETLAAIRMAKDAGYTVVISHRSGETEDATIADLAVATAAGQIKTGSLCRSDRVAKYNQLLRIEEQLGEKAPYKGRSEIKGQA.

Gln167 provides a ligand contact to (2R)-2-phosphoglycerate. The active-site Proton donor is Glu209. Mg(2+)-binding residues include Asp246, Glu289, and Asp316. (2R)-2-phosphoglycerate is bound by residues Lys341, Arg370, Ser371, and Lys392. The active-site Proton acceptor is the Lys341.

It belongs to the enolase family. In terms of assembly, component of the RNA degradosome, a multiprotein complex involved in RNA processing and mRNA degradation. The cofactor is Mg(2+).

It localises to the cytoplasm. The protein localises to the secreted. The protein resides in the cell surface. It catalyses the reaction (2R)-2-phosphoglycerate = phosphoenolpyruvate + H2O. It participates in carbohydrate degradation; glycolysis; pyruvate from D-glyceraldehyde 3-phosphate: step 4/5. Catalyzes the reversible conversion of 2-phosphoglycerate (2-PG) into phosphoenolpyruvate (PEP). It is essential for the degradation of carbohydrates via glycolysis. This Shewanella loihica (strain ATCC BAA-1088 / PV-4) protein is Enolase.